The sequence spans 907 residues: Aldehyde oxidoreductase (907 aa).

The 78-residue stretch at 2-79 (IQKVITVNGI…GAQITTIEGV (78 aa)) folds into the 2Fe-2S ferredoxin-type domain. [2Fe-2S] cluster-binding residues include cysteine 40, cysteine 45, cysteine 48, cysteine 60, cysteine 100, cysteine 103, cysteine 137, and cysteine 139. Mo-molybdopterin cytosine dinucleotide contacts are provided by histidine 653 and glutamate 869.

Belongs to the xanthine dehydrogenase family. In terms of assembly, homodimer. It depends on Mo-molybdopterin cytosine dinucleotide as a cofactor. [2Fe-2S] cluster serves as cofactor.

The enzyme catalyses an aldehyde + A + H2O = a carboxylate + AH2 + H(+). This Megalodesulfovibrio gigas (Desulfovibrio gigas) protein is Aldehyde oxidoreductase (mop).